Reading from the N-terminus, the 550-residue chain is Silent protein UshA(0) (550 aa).

An N-terminal signal peptide occupies residues 1–25 (MKFLKRGVALALLAAFALTTQPAQA). A divalent metal cation is bound by residues D41, H43, D84, N116, H217, H252, and Q254. An intrachain disulfide couples C258 to C275. Substrate contacts are provided by residues F429 and 498-504 (FNATGGD).

Belongs to the 5'-nucleotidase family. It depends on a divalent metal cation as a cofactor.

The protein resides in the periplasm. In Salmonella typhimurium (strain LT2 / SGSC1412 / ATCC 700720), this protein is Silent protein UshA(0) (ushA).